Here is a 319-residue protein sequence, read N- to C-terminus: Methionyl-tRNA formyltransferase (319 aa).

Residue 113-116 coordinates (6S)-5,6,7,8-tetrahydrofolate; that stretch reads SLLP.

This sequence belongs to the Fmt family.

It carries out the reaction L-methionyl-tRNA(fMet) + (6R)-10-formyltetrahydrofolate = N-formyl-L-methionyl-tRNA(fMet) + (6S)-5,6,7,8-tetrahydrofolate + H(+). Attaches a formyl group to the free amino group of methionyl-tRNA(fMet). The formyl group appears to play a dual role in the initiator identity of N-formylmethionyl-tRNA by promoting its recognition by IF2 and preventing the misappropriation of this tRNA by the elongation apparatus. The sequence is that of Methionyl-tRNA formyltransferase from Pseudomonas fluorescens (strain ATCC BAA-477 / NRRL B-23932 / Pf-5).